The chain runs to 155 residues: Peptide methionine sulfoxide reductase MsrB (155 aa).

A MsrB domain is found at 15 to 137 (REALIATLNA…NSVSLTFIPT (123 aa)). The Zn(2+) site is built by Cys-54, Cys-57, Cys-103, and Cys-106. Residue Cys-126 is the Nucleophile of the active site.

Belongs to the MsrB Met sulfoxide reductase family. It depends on Zn(2+) as a cofactor.

It carries out the reaction L-methionyl-[protein] + [thioredoxin]-disulfide + H2O = L-methionyl-(R)-S-oxide-[protein] + [thioredoxin]-dithiol. This Xylella fastidiosa (strain M23) protein is Peptide methionine sulfoxide reductase MsrB.